Reading from the N-terminus, the 310-residue chain is Proline-rich 28 kDa antigen (310 aa).

Residues 1–32 (MIQIARTWRVFAGGMATGFIGVVLVTAGKASA) form the signal peptide. Positions 278–310 (QAPAPAPGSAPVGLPGQAPGYPPAGTLTPVPPR) are disordered.

To M.leprae ML0031.

The protein is Proline-rich 28 kDa antigen (mtc28) of Mycobacterium bovis (strain ATCC BAA-935 / AF2122/97).